We begin with the raw amino-acid sequence, 275 residues long: Large ribosomal subunit protein uL2 (275 aa).

The disordered stretch occupies residues 223–275; that stretch reads VAMNPVDHPHGGGEGRTSGGRHPVSPWGQPTKGYKTRSNKRTDKYIVRRRNKK.

It belongs to the universal ribosomal protein uL2 family. As to quaternary structure, part of the 50S ribosomal subunit. Forms a bridge to the 30S subunit in the 70S ribosome.

Functionally, one of the primary rRNA binding proteins. Required for association of the 30S and 50S subunits to form the 70S ribosome, for tRNA binding and peptide bond formation. It has been suggested to have peptidyltransferase activity; this is somewhat controversial. Makes several contacts with the 16S rRNA in the 70S ribosome. This Shewanella halifaxensis (strain HAW-EB4) protein is Large ribosomal subunit protein uL2.